The chain runs to 541 residues: MEFPYHSTVSYNGVTFYFNERATRAYFICGGCLISIPRKHGGEIAKFGHVVRGVGPGDRSVASYVRSELNRTGKTWAVSSNNNCVFLDRVALLAAGSGAVDRDLCGTFDVEVEDPTLADYLVSLPVTHLTLVAGVDVTRENKLKLFPTPTAINTTNGFMYVPNEASFSLVYMRMLELPESLQELVSGLFDGTPEIRDALNGSNDDEKTSIIVSRRAADVVTEDVKADDVPISGEPYSEKQPRRRKKSDHITLSNFVQIRTIPRVMDIWDPRHKATTHCIRALSCAVFFADEVIFKARKWPGLEDELNEARETIYTAVVAVYGERGELPFFGHAYGRDLTSCQRFVIVQYILSRWEAFNCYAVIEDLTRSYVNALPSDDDTDQVAQDLIRTIVDTANSLLREVGFIGTLAETLLFLPLPQLPCYKETSHLAKKEGVRILRLAKTGVGLSDTVPVDVSVTERHEYEISRYLDTLYSGDPCYNGAVRLCRLLGSSIPIALYYNTISGNAFEPYFAGRRYIAYLGALFFGRVHQTPFGDGKKTQR.

It belongs to the alphaherpesvirinae UL21 protein family. As to quaternary structure, interacts (via C-terminus) with UL16.

It is found in the virion tegument. The protein resides in the host cytoplasm. Its subcellular location is the host nucleus. In terms of biological role, may participate in DNA packaging/capsid maturation events. Promotes efficient incorporation of tegument proteins UL46, UL49, and US3 homologs into virions. May also play a role in capsid transport to the trans-Golgi network (TGN). The protein is Tegument protein UL21 homolog of Homo sapiens (Human).